Here is a 156-residue protein sequence, read N- to C-terminus: MELRIGFGFDSHEFVEGKLLILGGVEIEKDYGLKGHSDGDALLHAITDAILGALGERDIGEIFKDTDPRWKNAPSRIFLEKALEVMSEKGFNISNIDCVIVADRPKIAPHKERIKESLSKLLGIPKERISLKGKRREGFCEGNGLVCMCTVLLVKM.

A divalent metal cation is bound by residues aspartate 10 and histidine 12. 4-CDP-2-C-methyl-D-erythritol 2-phosphate contacts are provided by residues aspartate 10–histidine 12 and histidine 36–serine 37. A divalent metal cation is bound at residue histidine 44. Residues aspartate 58–glycine 60 and phenylalanine 63–aspartate 67 contribute to the 4-CDP-2-C-methyl-D-erythritol 2-phosphate site.

This sequence belongs to the IspF family. Homotrimer. It depends on a divalent metal cation as a cofactor.

The catalysed reaction is 4-CDP-2-C-methyl-D-erythritol 2-phosphate = 2-C-methyl-D-erythritol 2,4-cyclic diphosphate + CMP. Its pathway is isoprenoid biosynthesis; isopentenyl diphosphate biosynthesis via DXP pathway; isopentenyl diphosphate from 1-deoxy-D-xylulose 5-phosphate: step 4/6. Its function is as follows. Involved in the biosynthesis of isopentenyl diphosphate (IPP) and dimethylallyl diphosphate (DMAPP), two major building blocks of isoprenoid compounds. Catalyzes the conversion of 4-diphosphocytidyl-2-C-methyl-D-erythritol 2-phosphate (CDP-ME2P) to 2-C-methyl-D-erythritol 2,4-cyclodiphosphate (ME-CPP) with a corresponding release of cytidine 5-monophosphate (CMP). This is 2-C-methyl-D-erythritol 2,4-cyclodiphosphate synthase from Aquifex aeolicus (strain VF5).